A 380-amino-acid chain; its full sequence is Type 4 apparatus protein DotM (380 aa).

2 helical membrane passes run 18–38 (MAPV…WALA) and 99–119 (YPVI…NVTL).

The T4BSS is a complex nanomachine composed of several subcomplexes. This subunit is part of the Type IV Coupling Complex (T4CC), a subcomplex composed of the DotLMNYZ core and the IcmSW-LvgA adapter subunits, linked by the C-terminal tail of DotL. Six DotLMNYZ hetero-pentameric units may assemble into a hexameric nanomachine, forming an inner membrane channel for effectors to pass through. Interacts directly with DotL.

The protein localises to the cell inner membrane. Component of the Dot/Icm type IVB secretion system (T4BSS), which is used to inject bacterial effector proteins into eukaryotic host cells. Part of a subcomplex which recruits effector proteins and delivers them to the core transmembrane subcomplex. Forms the interacting surface for recruitment of acidic Glu-rich motif-containing effectors. The sequence is that of Type 4 apparatus protein DotM from Legionella pneumophila subsp. pneumophila (strain Philadelphia 1 / ATCC 33152 / DSM 7513).